We begin with the raw amino-acid sequence, 159 residues long: Fatty acid-binding protein homolog 1 (159 aa).

The signal sequence occupies residues 1–17 (MCAKIALLLVLVGAASA).

The protein belongs to the calycin superfamily. Fatty-acid binding protein (FABP) family. First detected in hypodermal precursor cells at the time of gastrulation. From the two-fold stage through to three-fold stages, expression is localized exclusively to hyp-7 but disappears in newly hatched L1s and subsequent developmental stages. Expression from L1 to adult stages is found in a single neuron in the ventral cord with a process into the nerve ring.

Its subcellular location is the secreted. May play a role in sequestering potentially toxic fatty acids and their peroxidation products, or it may be involved in the maintenance of the impermeable lipid layer of the eggshell. The polypeptide is Fatty acid-binding protein homolog 1 (lbp-1) (Caenorhabditis elegans).